Reading from the N-terminus, the 304-residue chain is Dihydroorotate dehydrogenase B (NAD(+)), catalytic subunit (304 aa).

FMN is bound by residues Ser-21 and 45-46 (KA). Substrate is bound by residues Lys-45 and 69 to 73 (NAIGL). Residues Asn-99 and Asn-127 each contribute to the FMN site. Asn-127 lines the substrate pocket. Cys-130 acts as the Nucleophile in catalysis. FMN contacts are provided by Lys-165 and Ile-191. 192–193 (NT) serves as a coordination point for substrate. Residues Gly-217, 243–244 (GG), and 265–266 (GT) each bind FMN.

Belongs to the dihydroorotate dehydrogenase family. Type 1 subfamily. Heterotetramer of 2 PyrK and 2 PyrD type B subunits. Requires FMN as cofactor.

It is found in the cytoplasm. It carries out the reaction (S)-dihydroorotate + NAD(+) = orotate + NADH + H(+). The protein operates within pyrimidine metabolism; UMP biosynthesis via de novo pathway; orotate from (S)-dihydroorotate (NAD(+) route): step 1/1. In terms of biological role, catalyzes the conversion of dihydroorotate to orotate with NAD(+) as electron acceptor. This chain is Dihydroorotate dehydrogenase B (NAD(+)), catalytic subunit (pyrD), found in Listeria monocytogenes serotype 4a (strain HCC23).